The primary structure comprises 258 residues: Coiled-coil domain-containing protein 127 (258 aa).

Residues 50–170 (KEIEKEKEAC…EEALAERQSI (121 aa)) are a coiled coil.

In Sus scrofa (Pig), this protein is Coiled-coil domain-containing protein 127 (CCDC127).